An 87-amino-acid chain; its full sequence is Large ribosomal subunit protein bL31B (87 aa).

This sequence belongs to the bacterial ribosomal protein bL31 family. Type B subfamily. In terms of assembly, part of the 50S ribosomal subunit.

The sequence is that of Large ribosomal subunit protein bL31B from Burkholderia multivorans (strain ATCC 17616 / 249).